A 699-amino-acid chain; its full sequence is MSNNSERSQGKCPVMHGGTTSGEQANMAWWPKSLNLDMAALKQDVTALMTDSQDWWPADWGHYGALMIRMAWHSAGTYRIADGRGGGSTGNQRFAPLNSWPDNANLDKARRLLWPIKKKYGNKISWADLIILAGTVAYESMGLKTFGFAFGREDIWHPEKDIYWGAEKEWLAPSSKPGGRYSGERDLDNPLAAVMMGLIYVNPEGVDGNPDPLKTAKDMRVTFARMAMDDEETVALTAGGHTVGKCHGNGDARLLGPEPEGAAVEDQGLGWLNKTQRGIGRNAVTSGIEGAWTTHPTRWDNGYFYLLFNYEWELKKSPAGAWQWEPVNIREEDKPVDVEDPAIRHNPIMTDADMALKFDPEYRKIAERFRADPAAFSDAFARAWFKLTHRDLGPKTRYVGPYVPAEDLIWQDPVPAGRTDYDVAAVKASIAASGLSISDMVSTAWDSARTFRGSDLRGGANGARIRLAPQNEWEGNEPARLARVLKVLEPIAAASQISVADVIVLAGNLGVELAARAAGVEVTVPFSPGRGDASQARTDVASFDVLEPLADGYRNWLKKDYAVTAEELMLDRTQLMGLTAHEMTVLVGGMRVLGTNHGGTRHGVFTEREGALTNDYFVNLTDMANTWHPSGDRLYEVRDRKSGKVKWTATRIDLVFGSNSVLRAYAEVYAQDDNKEKFVCDFISAWNKVMNADRFDLMS.

Positions 72-200 (WHSAGTYRIA…LAAVMMGLIY (129 aa)) form a cross-link, tryptophyl-tyrosyl-methioninium (Trp-Tyr) (with M-226). Catalysis depends on histidine 73, which acts as the Proton acceptor. Residues 200-226 (YVNPEGVDGNPDPLKTAKDMRVTFARM) constitute a cross-link (tryptophyl-tyrosyl-methioninium (Tyr-Met) (with W-72)). Histidine 241 contributes to the heme b binding site.

The protein belongs to the peroxidase family. Peroxidase/catalase subfamily. Homodimer or homotetramer. It depends on heme b as a cofactor. Post-translationally, formation of the three residue Trp-Tyr-Met cross-link is important for the catalase, but not the peroxidase activity of the enzyme.

The catalysed reaction is H2O2 + AH2 = A + 2 H2O. It catalyses the reaction 2 H2O2 = O2 + 2 H2O. Functionally, bifunctional enzyme with both catalase and broad-spectrum peroxidase activity. This Aeromonas salmonicida (strain A449) protein is Catalase-peroxidase.